We begin with the raw amino-acid sequence, 421 residues long: 4-hydroxy-3-methylbut-2-en-1-yl diphosphate synthase (flavodoxin) (421 aa).

Cys311, Cys314, Cys357, and Glu364 together coordinate [4Fe-4S] cluster.

Belongs to the IspG family. The cofactor is [4Fe-4S] cluster.

It carries out the reaction (2E)-4-hydroxy-3-methylbut-2-enyl diphosphate + oxidized [flavodoxin] + H2O + 2 H(+) = 2-C-methyl-D-erythritol 2,4-cyclic diphosphate + reduced [flavodoxin]. The protein operates within isoprenoid biosynthesis; isopentenyl diphosphate biosynthesis via DXP pathway; isopentenyl diphosphate from 1-deoxy-D-xylulose 5-phosphate: step 5/6. In terms of biological role, converts 2C-methyl-D-erythritol 2,4-cyclodiphosphate (ME-2,4cPP) into 1-hydroxy-2-methyl-2-(E)-butenyl 4-diphosphate. The sequence is that of 4-hydroxy-3-methylbut-2-en-1-yl diphosphate synthase (flavodoxin) from Xanthomonas oryzae pv. oryzae (strain KACC10331 / KXO85).